A 360-amino-acid chain; its full sequence is Proline-rich protein 11 (360 aa).

2 disordered regions span residues 20–43 (KKKE…SPER) and 174–201 (PPTL…PPLA). Thr-33 is modified (phosphothreonine). Ser-40 is subject to Phosphoserine. A compositionally biased stretch (pro residues) spans 175–201 (PTLPQPASHFPPPPPPPPLPPPPPPLA). The Phosphodegron motif lies at 285 to 291 (LITPGKS). Position 287 is a phosphothreonine (Thr-287). Ser-291 is subject to Phosphoserine. The D-box signature appears at 296–304 (RKLLRKVDV). Positions 316 to 318 (KEN) match the KEN box motif. The Phosphodegron motif lies at 325–330 (LTPVMT). Residues 340–360 (AHPRSPTPTLPLSTSSFDEQN) are disordered. Position 344 is a phosphoserine (Ser-344). Phosphothreonine is present on residues Thr-346 and Thr-348. Low complexity predominate over residues 349–360 (LPLSTSSFDEQN).

In terms of processing, ubiquitinated. Rapidly degraded by the proteasome; degradation may involve FBXW7-specific phosphorylated phosphodegron motifs. As to expression, ubiquitously expressed.

The protein resides in the cytoplasm. Its subcellular location is the nucleus. Its function is as follows. Plays a critical role in cell cycle progression. This is Proline-rich protein 11 (PRR11) from Homo sapiens (Human).